A 123-amino-acid polypeptide reads, in one-letter code: Large ribosomal subunit protein bL12 (123 aa).

This sequence belongs to the bacterial ribosomal protein bL12 family. As to quaternary structure, homodimer. Part of the ribosomal stalk of the 50S ribosomal subunit. Forms a multimeric L10(L12)X complex, where L10 forms an elongated spine to which 2 to 4 L12 dimers bind in a sequential fashion. Binds GTP-bound translation factors.

Forms part of the ribosomal stalk which helps the ribosome interact with GTP-bound translation factors. Is thus essential for accurate translation. The chain is Large ribosomal subunit protein bL12 from Finegoldia magna (strain ATCC 29328 / DSM 20472 / WAL 2508) (Peptostreptococcus magnus).